The chain runs to 142 residues: Large ribosomal subunit protein uL13 (142 aa).

It belongs to the universal ribosomal protein uL13 family. In terms of assembly, part of the 50S ribosomal subunit.

Its function is as follows. This protein is one of the early assembly proteins of the 50S ribosomal subunit, although it is not seen to bind rRNA by itself. It is important during the early stages of 50S assembly. The polypeptide is Large ribosomal subunit protein uL13 (Janthinobacterium sp. (strain Marseille) (Minibacterium massiliensis)).